The following is a 274-amino-acid chain: Large ribosomal subunit protein uL2 (274 aa).

Residues 221 to 274 (RGTAMNPVDHPHGGGEGKNFGKHPVTPWGVQTKGKKTRSNKRTDKFIVRRRSKK) are disordered.

It belongs to the universal ribosomal protein uL2 family. As to quaternary structure, part of the 50S ribosomal subunit. Forms a bridge to the 30S subunit in the 70S ribosome.

One of the primary rRNA binding proteins. Required for association of the 30S and 50S subunits to form the 70S ribosome, for tRNA binding and peptide bond formation. It has been suggested to have peptidyltransferase activity; this is somewhat controversial. Makes several contacts with the 16S rRNA in the 70S ribosome. The sequence is that of Large ribosomal subunit protein uL2 from Serratia proteamaculans (strain 568).